The chain runs to 278 residues: MTQMNFTDRATRVAIIANGKYQSKRVASKLFAAFKHDPDFYLSKKDPDIVISIGGDGMLLSAFHMYEKQLDKVRFVGVHTGHLGFYTDYRDFEVDTLINNLKNDKGEQISYPILKVTITLEDGRVIRARALNESTIKRIEKTMVADVVINQVVFERFRGDGILVSTPTGSTAYNKSLGGAVLHPTIEALQLTEISSLNNRVYRTLGSSVIIPKKDAIEIVPKRVGVYTISIDNKTVHYKNVTKIEYSIDEKSINFVSTPSHTSFWERVNDAFIGEPEH.

The active-site Proton acceptor is the Asp56. Residues 56–57 (DG), 132–133 (NE), Arg158, Asp160, and 171–176 (TAYNKS) each bind NAD(+).

This sequence belongs to the NAD kinase family. A divalent metal cation is required as a cofactor.

It is found in the cytoplasm. The catalysed reaction is NAD(+) + ATP = ADP + NADP(+) + H(+). Functionally, involved in the regulation of the intracellular balance of NAD and NADP, and is a key enzyme in the biosynthesis of NADP. Catalyzes specifically the phosphorylation on 2'-hydroxyl of the adenosine moiety of NAD to yield NADP. The chain is NAD kinase from Streptococcus agalactiae serotype V (strain ATCC BAA-611 / 2603 V/R).